The following is a 68-amino-acid chain: U-poneritoxin(01)-Om4b (68 aa).

Positions 1 to 25 are cleaved as a signal peptide; it reads MKPSGLTLAFLVVFMMAIMYNSVQA. Positions 26-39 are excised as a propeptide; that stretch reads EALADADAEAFAEA.

Belongs to the formicidae venom precursor-01 superfamily. As to quaternary structure, homo- or heterodimer with PLP4 (AC A0A348G5W0); disulfide-linked. Truncated sequences of this peptide have also been found in the venom. It is possible they have been cleaved in the venom. As to expression, expressed by the venom gland.

The protein localises to the secreted. This homodimer composed of two cationic amphipathic alpha-helical peptides has antimicrobial activities against E.coli, S.aureus (MIC=3.1 uM), and S.cerevisiae (MIC=3.1 uM). It also shows histamine-releasing activity (66.4% at 10 uM) and a weak hemolytic activity (10.5% at 50 uM). The polypeptide is U-poneritoxin(01)-Om4b (Odontomachus monticola (Trap-jaw ant)).